The following is a 119-amino-acid chain: Small ribosomal subunit protein bS6 (119 aa).

A disordered region spans residues 96 to 119 (VTEPSPLARSQEKDEEEGGRTAEA).

This sequence belongs to the bacterial ribosomal protein bS6 family.

Binds together with bS18 to 16S ribosomal RNA. In Alkalilimnicola ehrlichii (strain ATCC BAA-1101 / DSM 17681 / MLHE-1), this protein is Small ribosomal subunit protein bS6.